Here is a 231-residue protein sequence, read N- to C-terminus: 7-cyano-7-deazaguanine synthase (231 aa).

Residue 8-18 participates in ATP binding; that stretch reads FSGGQDSTTCL. Positions 188, 197, 200, and 203 each coordinate Zn(2+).

The protein belongs to the QueC family. The cofactor is Zn(2+).

It catalyses the reaction 7-carboxy-7-deazaguanine + NH4(+) + ATP = 7-cyano-7-deazaguanine + ADP + phosphate + H2O + H(+). Its pathway is purine metabolism; 7-cyano-7-deazaguanine biosynthesis. In terms of biological role, catalyzes the ATP-dependent conversion of 7-carboxy-7-deazaguanine (CDG) to 7-cyano-7-deazaguanine (preQ(0)). The polypeptide is 7-cyano-7-deazaguanine synthase (Shigella dysenteriae serotype 1 (strain Sd197)).